We begin with the raw amino-acid sequence, 182 residues long: MFDIGFSELLLVFVIGLIVLGPQRLPVAVKTVAGWIRALRSLATTVQNELTQELKLQEFQDSLKKVEKASLENLTPELKASMDELRQAAESMKRTYSANDPEQASDEAHTIHNPVVKGNETQHEGVTPAAAETQASAPEQKPEPVKANVPESTETASVATIDAEKKSAAPVVESSPSSSDKP.

Residues 1–21 (MFDIGFSELLLVFVIGLIVLG) form a helical membrane-spanning segment. Disordered stretches follow at residues 87–107 (QAAE…ASDE) and 121–182 (TQHE…SDKP). Positions 168–182 (AAPVVESSPSSSDKP) are enriched in low complexity.

The protein belongs to the TatB family. The Tat system comprises two distinct complexes: a TatABC complex, containing multiple copies of TatA, TatB and TatC subunits, and a separate TatA complex, containing only TatA subunits. Substrates initially bind to the TatABC complex, which probably triggers association of the separate TatA complex to form the active translocon.

Its subcellular location is the cell inner membrane. Part of the twin-arginine translocation (Tat) system that transports large folded proteins containing a characteristic twin-arginine motif in their signal peptide across membranes. Together with TatC, TatB is part of a receptor directly interacting with Tat signal peptides. TatB may form an oligomeric binding site that transiently accommodates folded Tat precursor proteins before their translocation. The protein is Sec-independent protein translocase protein TatB of Salmonella choleraesuis (strain SC-B67).